The chain runs to 119 residues: Ribonuclease P protein component (119 aa).

The protein belongs to the RnpA family. Consists of a catalytic RNA component (M1 or rnpB) and a protein subunit.

It catalyses the reaction Endonucleolytic cleavage of RNA, removing 5'-extranucleotides from tRNA precursor.. Functionally, RNaseP catalyzes the removal of the 5'-leader sequence from pre-tRNA to produce the mature 5'-terminus. It can also cleave other RNA substrates such as 4.5S RNA. The protein component plays an auxiliary but essential role in vivo by binding to the 5'-leader sequence and broadening the substrate specificity of the ribozyme. In Nitrosomonas europaea (strain ATCC 19718 / CIP 103999 / KCTC 2705 / NBRC 14298), this protein is Ribonuclease P protein component.